The primary structure comprises 108 residues: Peptidyl-prolyl cis-trans isomerase Fkbp12 (108 aa).

The disordered stretch occupies residues 1–21 (MGVQVVPIAPGDGSTYPKNGQ). The region spanning 20-108 (GQKVTVHYTG…TFDVELLKVE (89 aa)) is the PPIase FKBP-type domain.

The protein belongs to the FKBP-type PPIase family. FKBP1 subfamily.

The protein resides in the cytoplasm. The catalysed reaction is [protein]-peptidylproline (omega=180) = [protein]-peptidylproline (omega=0). Its function is as follows. PPIases accelerate the folding of proteins. It catalyzes the cis-trans isomerization of proline imidic peptide bonds in oligopeptides. Binds to ligand-free TGF beta type I receptor, from which it is released upon a ligand-induced, type II receptor mediated phosphorylation of the type I receptor. Binding is inhibitory to the signaling pathways of the TGF beta family ligands. The protein is Peptidyl-prolyl cis-trans isomerase Fkbp12 of Drosophila melanogaster (Fruit fly).